Here is a 233-residue protein sequence, read N- to C-terminus: 3-dehydroquinate dehydratase (233 aa).

3-dehydroquinate is bound by residues 39-41 (EIR) and arginine 73. Histidine 132 (proton donor/acceptor) is an active-site residue. Catalysis depends on lysine 159, which acts as the Schiff-base intermediate with substrate. 3-dehydroquinate-binding residues include arginine 196 and glutamine 219.

Belongs to the type-I 3-dehydroquinase family. Homodimer.

The enzyme catalyses 3-dehydroquinate = 3-dehydroshikimate + H2O. The protein operates within metabolic intermediate biosynthesis; chorismate biosynthesis; chorismate from D-erythrose 4-phosphate and phosphoenolpyruvate: step 3/7. Its function is as follows. Involved in the third step of the chorismate pathway, which leads to the biosynthesis of aromatic amino acids. Catalyzes the cis-dehydration of 3-dehydroquinate (DHQ) and introduces the first double bond of the aromatic ring to yield 3-dehydroshikimate. In Methanococcoides burtonii (strain DSM 6242 / NBRC 107633 / OCM 468 / ACE-M), this protein is 3-dehydroquinate dehydratase.